A 336-amino-acid polypeptide reads, in one-letter code: L-rhamnono-gamma-lactonase (336 aa).

It belongs to the metallo-dependent hydrolases superfamily. Requires a divalent metal cation as cofactor.

It carries out the reaction L-rhamnono-1,4-lactone + H2O = L-rhamnonate + H(+). With respect to regulation, inhibited by Zn(2+), Fe(2+) and Cu(2+), but not by EDTA. Its function is as follows. Hydrolase with high substrate specificity for L-rhamnono-1,4-lactone. Catalyzes the second step in an alternative pathway for rhamnose utilization that does not involve phosphorylated intermediates. The sequence is that of L-rhamnono-gamma-lactonase (LRA2) from Scheffersomyces stipitis (strain ATCC 58785 / CBS 6054 / NBRC 10063 / NRRL Y-11545) (Yeast).